Consider the following 718-residue polypeptide: Ribosomal RNA large subunit methyltransferase K/L (718 aa).

The region spanning 44–155 (DAYKVCIYSY…KQFVNVFLCL (112 aa)) is the THUMP domain.

Belongs to the methyltransferase superfamily. RlmKL family.

It is found in the cytoplasm. It carries out the reaction guanosine(2445) in 23S rRNA + S-adenosyl-L-methionine = N(2)-methylguanosine(2445) in 23S rRNA + S-adenosyl-L-homocysteine + H(+). The catalysed reaction is guanosine(2069) in 23S rRNA + S-adenosyl-L-methionine = N(2)-methylguanosine(2069) in 23S rRNA + S-adenosyl-L-homocysteine + H(+). Its function is as follows. Specifically methylates the guanine in position 2445 (m2G2445) and the guanine in position 2069 (m7G2069) of 23S rRNA. This Francisella tularensis subsp. novicida (strain U112) protein is Ribosomal RNA large subunit methyltransferase K/L.